The primary structure comprises 506 residues: Deoxyguanosinetriphosphate triphosphohydrolase (506 aa).

One can recognise an HD domain in the interval 66 to 274 (RLTHSLEVQQ…MEAADDISYC (209 aa)).

It belongs to the dGTPase family. Type 1 subfamily. As to quaternary structure, homotetramer. It depends on Mg(2+) as a cofactor.

It carries out the reaction dGTP + H2O = 2'-deoxyguanosine + triphosphate + H(+). Functionally, dGTPase preferentially hydrolyzes dGTP over the other canonical NTPs. This is Deoxyguanosinetriphosphate triphosphohydrolase from Yersinia pestis bv. Antiqua (strain Antiqua).